We begin with the raw amino-acid sequence, 326 residues long: Protein ORF5 in retron Ec67 (326 aa).

Positions 1–24 (MGKSKKNRAAATNQLKHKSQTSAE) are disordered. Polar residues predominate over residues 10–24 (AATNQLKHKSQTSAE).

This sequence belongs to the phage portal family. PBSX subfamily.

This is Protein ORF5 in retron Ec67 from Escherichia coli.